The chain runs to 302 residues: Uricase (302 aa).

Active-site charge relay system residues include Lys22 and Thr67. The urate site is built by Thr67, Asp68, Phe163, Arg180, Gln223, and Asn249. Residue His251 is the Charge relay system of the active site.

The protein belongs to the uricase family. In terms of assembly, homotetramer.

It carries out the reaction urate + O2 + H2O = 5-hydroxyisourate + H2O2. The protein operates within purine metabolism; urate degradation; (S)-allantoin from urate: step 1/3. Its function is as follows. Catalyzes the oxidation of uric acid to 5-hydroxyisourate, which is further processed to form (S)-allantoin. This Arthrobacter globiformis protein is Uricase (uox).